Consider the following 159-residue polypeptide: 2-C-methyl-D-erythritol 2,4-cyclodiphosphate synthase (159 aa).

A divalent metal cation-binding residues include D10 and H12. 4-CDP-2-C-methyl-D-erythritol 2-phosphate-binding positions include 10-12 and 36-37; these read DVH and HS. H44 contacts a divalent metal cation. Residues 58 to 60, 134 to 137, F141, and R144 each bind 4-CDP-2-C-methyl-D-erythritol 2-phosphate; these read DIG and TTSE.

The protein belongs to the IspF family. Homotrimer. A divalent metal cation serves as cofactor.

It carries out the reaction 4-CDP-2-C-methyl-D-erythritol 2-phosphate = 2-C-methyl-D-erythritol 2,4-cyclic diphosphate + CMP. The protein operates within isoprenoid biosynthesis; isopentenyl diphosphate biosynthesis via DXP pathway; isopentenyl diphosphate from 1-deoxy-D-xylulose 5-phosphate: step 4/6. Functionally, involved in the biosynthesis of isopentenyl diphosphate (IPP) and dimethylallyl diphosphate (DMAPP), two major building blocks of isoprenoid compounds. Catalyzes the conversion of 4-diphosphocytidyl-2-C-methyl-D-erythritol 2-phosphate (CDP-ME2P) to 2-C-methyl-D-erythritol 2,4-cyclodiphosphate (ME-CPP) with a corresponding release of cytidine 5-monophosphate (CMP). This Roseobacter denitrificans (strain ATCC 33942 / OCh 114) (Erythrobacter sp. (strain OCh 114)) protein is 2-C-methyl-D-erythritol 2,4-cyclodiphosphate synthase.